We begin with the raw amino-acid sequence, 82 residues long: ATP synthase subunit c, chloroplastic (82 aa).

Transmembrane regions (helical) follow at residues 4–24 (IISAASVIAAGLSVGLAAIGP) and 57–77 (LAFMEALTIYGLVVALSLLFA).

This sequence belongs to the ATPase C chain family. In terms of assembly, F-type ATPases have 2 components, F(1) - the catalytic core - and F(0) - the membrane proton channel. F(1) has five subunits: alpha(3), beta(3), gamma(1), delta(1), epsilon(1). F(0) has four main subunits: a(1), b(1), b'(1) and c(10-14). The alpha and beta chains form an alternating ring which encloses part of the gamma chain. F(1) is attached to F(0) by a central stalk formed by the gamma and epsilon chains, while a peripheral stalk is formed by the delta, b and b' chains.

It localises to the plastid. Its subcellular location is the chloroplast thylakoid membrane. Functionally, f(1)F(0) ATP synthase produces ATP from ADP in the presence of a proton or sodium gradient. F-type ATPases consist of two structural domains, F(1) containing the extramembraneous catalytic core and F(0) containing the membrane proton channel, linked together by a central stalk and a peripheral stalk. During catalysis, ATP synthesis in the catalytic domain of F(1) is coupled via a rotary mechanism of the central stalk subunits to proton translocation. Its function is as follows. Key component of the F(0) channel; it plays a direct role in translocation across the membrane. A homomeric c-ring of between 10-14 subunits forms the central stalk rotor element with the F(1) delta and epsilon subunits. This is ATP synthase subunit c, chloroplastic from Heterosigma akashiwo (strain NIES-293 / 8280G21-1).